We begin with the raw amino-acid sequence, 511 residues long: Maturase K (511 aa).

Belongs to the intron maturase 2 family. MatK subfamily.

Its subcellular location is the plastid. It is found in the chloroplast. Usually encoded in the trnK tRNA gene intron. Probably assists in splicing its own and other chloroplast group II introns. In Trifolium burchellianum (Wild clover), this protein is Maturase K.